The sequence spans 634 residues: Dachshund homolog 2 (634 aa).

Positions 76 to 162 (RMVDMHGVKV…LITRKDFETL (87 aa)) are DACHbox-N. Disordered stretches follow at residues 171–194 (RKRQ…KRSL), 244–286 (LQGN…SGPQ), and 378–416 (IPES…MDHH). The segment covering 244–269 (LQGNGSQNGTESEPDDLNSTTGGSES) has biased composition (polar residues). The segment covering 396-412 (SQTSSHPSSSVSSSPSQ) has biased composition (low complexity). Residues 488-568 (SSVETLLTNI…KAKRKLQEAL (81 aa)) form a DACHbox-C region. Positions 494 to 588 (LTNIQGLLKV…EQALKQATSG (95 aa)) form a coiled coil.

It belongs to the DACH/dachshund family. As to quaternary structure, interacts with SIX6. Interacts with EYA2. Expressed in embryo, and at lower levels in the newborn.

It is found in the nucleus. Functionally, transcription factor that is involved in regulation of organogenesis. Seems to be a regulator for SIX1 and SIX6. Seems to act as a corepressor of SIX6 in regulating proliferation by directly repressing cyclin-dependent kinase inhibitors, including the p27Kip1 promoter. Is recruited with SIX6 to the p27Kip1 promoter in embryonal retina. SIX6 corepression also seems to involve NCOR1, TBL1, HDAC1 and HDAC3. May be involved together with PAX3, SIX1, and EYA2 in regulation of myogenesis. In the developing somite, expression of DACH2 and PAX3 is regulated by the overlying ectoderm, and DACH2 and PAX3 positively regulate each other's expression. Probably binds to DNA via its DACHbox-N domain. In Mus musculus (Mouse), this protein is Dachshund homolog 2 (Dach2).